The chain runs to 204 residues: Thymidylate kinase (204 aa).

An ATP-binding site is contributed by G11–T18.

Belongs to the thymidylate kinase family.

The catalysed reaction is dTMP + ATP = dTDP + ADP. The protein operates within pyrimidine metabolism; dTTP biosynthesis. This chain is Thymidylate kinase (TMK), found in Rabbitpox virus (strain Utrecht) (RPV).